The chain runs to 292 residues: Galactinol synthase 2 (292 aa).

Lys65 is a catalytic residue. Mn(2+) contacts are provided by Asp81, Asp83, and His218.

The protein belongs to the glycosyltransferase 8 family. Galactosyltransferase subfamily. Requires a divalent metal cation as cofactor. As to expression, present in phloem-associated intermediary cells. Weakly expressed in leaves.

The protein resides in the cytoplasm. It catalyses the reaction myo-inositol + UDP-alpha-D-galactose = alpha-D-galactosyl-(1-&gt;3)-1D-myo-inositol + UDP + H(+). In terms of biological role, may promote plant stress tolerance. Galactinol synthase mainly involved in the biosynthesis of transport raffinose family oligosaccharides (RFOs) that function as osmoprotectants. The protein is Galactinol synthase 2 (GOLS2) of Ajuga reptans (Bugle).